The primary structure comprises 319 residues: Ribonuclease Z (319 aa).

Positions 62, 64, 66, 67, 145, 215, and 273 each coordinate Zn(2+). Residue Asp-66 is the Proton acceptor of the active site.

It belongs to the RNase Z family. Homodimer. It depends on Zn(2+) as a cofactor.

The catalysed reaction is Endonucleolytic cleavage of RNA, removing extra 3' nucleotides from tRNA precursor, generating 3' termini of tRNAs. A 3'-hydroxy group is left at the tRNA terminus and a 5'-phosphoryl group is left at the trailer molecule.. Zinc phosphodiesterase, which displays some tRNA 3'-processing endonuclease activity. Probably involved in tRNA maturation, by removing a 3'-trailer from precursor tRNA. The polypeptide is Ribonuclease Z (Borreliella afzelii (strain PKo) (Borrelia afzelii)).